The sequence spans 95 residues: Large ribosomal subunit protein bL25 (95 aa).

It belongs to the bacterial ribosomal protein bL25 family. As to quaternary structure, part of the 50S ribosomal subunit; part of the 5S rRNA/L5/L18/L25 subcomplex. Contacts the 5S rRNA. Binds to the 5S rRNA independently of L5 and L18.

In terms of biological role, this is one of the proteins that binds to the 5S RNA in the ribosome where it forms part of the central protuberance. The protein is Large ribosomal subunit protein bL25 of Aeromonas salmonicida (strain A449).